We begin with the raw amino-acid sequence, 572 residues long: Proline--tRNA ligase (572 aa).

Belongs to the class-II aminoacyl-tRNA synthetase family. ProS type 1 subfamily. Homodimer.

Its subcellular location is the cytoplasm. It catalyses the reaction tRNA(Pro) + L-proline + ATP = L-prolyl-tRNA(Pro) + AMP + diphosphate. Its function is as follows. Catalyzes the attachment of proline to tRNA(Pro) in a two-step reaction: proline is first activated by ATP to form Pro-AMP and then transferred to the acceptor end of tRNA(Pro). As ProRS can inadvertently accommodate and process non-cognate amino acids such as alanine and cysteine, to avoid such errors it has two additional distinct editing activities against alanine. One activity is designated as 'pretransfer' editing and involves the tRNA(Pro)-independent hydrolysis of activated Ala-AMP. The other activity is designated 'posttransfer' editing and involves deacylation of mischarged Ala-tRNA(Pro). The misacylated Cys-tRNA(Pro) is not edited by ProRS. The sequence is that of Proline--tRNA ligase from Caldicellulosiruptor bescii (strain ATCC BAA-1888 / DSM 6725 / KCTC 15123 / Z-1320) (Anaerocellum thermophilum).